We begin with the raw amino-acid sequence, 231 residues long: GDSL lipase Rv0518 (231 aa).

The signal sequence occupies residues 1–20; it reads MSRPGTYVIGLTLLVGLVVG. The Nucleophile role is filled by serine 46. Catalysis depends on aspartate 205, which acts as the Proton donor. Histidine 208 acts as the Proton acceptor in catalysis.

It belongs to the 'GDSL' lipolytic enzyme family.

It is found in the secreted. It localises to the cell wall. The protein localises to the extracellular space. The catalysed reaction is a fatty acid ester + H2O = an aliphatic alcohol + a fatty acid + H(+). It catalyses the reaction decanoate ester + H2O = decanoate + an aliphatic alcohol + H(+). The enzyme catalyses an octanoate ester + H2O = an aliphatic alcohol + octanoate + H(+). It carries out the reaction a dodecanoate ester + H2O = an aliphatic alcohol + dodecanoate + H(+). The catalysed reaction is a tetradecanoate ester + H2O = an aliphatic alcohol + tetradecanoate + H(+). Activity is inhibited by the serine modifier phenylmethylsulfonyl fluoride (PMSF). GDSL lipase that catalyzes the hydrolysis of p-nitrophenyl (pNP) esters. pNP-decanoate (C10) is the preferred substrate. It can also use pNP-octanoate (C8), pNP-dodecanoate (C12) and pNP-tetradecanoate (C14). Has lower activity with pNP-butyrate (C4), pNP-palmitate (C16) and pNP-stearate (C18). Does not show phospholipase A1 activity. Might help bacteria to utilize available lipids for its growth as well as provide resistance to various intracellular stresses by cell wall modulation resulting in enhanced intracellular survival. The protein is GDSL lipase Rv0518 of Mycobacterium tuberculosis (strain ATCC 25618 / H37Rv).